The following is a 51-amino-acid chain: Insulin (51 aa).

Cystine bridges form between Cys-7–Cys-37, Cys-19–Cys-50, and Cys-36–Cys-41.

This sequence belongs to the insulin family. Heterodimer of a B chain and an A chain linked by two disulfide bonds.

It is found in the secreted. Functionally, insulin decreases blood glucose concentration. It increases cell permeability to monosaccharides, amino acids and fatty acids. It accelerates glycolysis, the pentose phosphate cycle, and glycogen synthesis in liver. This Anser anser anser (Western greylag goose) protein is Insulin (INS).